We begin with the raw amino-acid sequence, 484 residues long: MPISDFQVVIGLEVHAQLLTASKIFCGCSTAFGAAPNAHTCPVCLGLPGALPALNRSVVEMAVRTGLALGCEIRPKSVFARKNYFYPDLPKGYQISQYELPICEGGEVTFTLDGRDHTARLVRIHMEEDAGKNVHDVAADGASGVDLNRAGVPLVEIVSRPDLRSAEEAVEYLKALRAILMALGVNDGNMQEGSLRCDANVSVMRKGASELGTRCEIKNMNSFRFLKQAIEFEARRQVELIEAGEPVVQETRLFDPDRGETRSMRSKEEAHDYRYFPEPDLPPVIVEAALVERIRGELPELPRARAERYQRSLGLSAYDAGNLVADAAVSAWFDAALAAYGAGPEAAKKVANWVTGELARLANETGEAPAAWKVTPARLAATLRLVDAGTIGGPGAKQVLEEVFRTGAEPDAVVKAKGLAQVSDEGAIEAAVDKVLAANPGEAEKYRGGRKNLLGFFVGQVMKEMRGKGNPAVVNALLRRKLGD.

This sequence belongs to the GatB/GatE family. GatB subfamily. As to quaternary structure, heterotrimer of A, B and C subunits.

It carries out the reaction L-glutamyl-tRNA(Gln) + L-glutamine + ATP + H2O = L-glutaminyl-tRNA(Gln) + L-glutamate + ADP + phosphate + H(+). The catalysed reaction is L-aspartyl-tRNA(Asn) + L-glutamine + ATP + H2O = L-asparaginyl-tRNA(Asn) + L-glutamate + ADP + phosphate + 2 H(+). Allows the formation of correctly charged Asn-tRNA(Asn) or Gln-tRNA(Gln) through the transamidation of misacylated Asp-tRNA(Asn) or Glu-tRNA(Gln) in organisms which lack either or both of asparaginyl-tRNA or glutaminyl-tRNA synthetases. The reaction takes place in the presence of glutamine and ATP through an activated phospho-Asp-tRNA(Asn) or phospho-Glu-tRNA(Gln). The polypeptide is Aspartyl/glutamyl-tRNA(Asn/Gln) amidotransferase subunit B (Anaeromyxobacter sp. (strain K)).